The sequence spans 339 residues: MPSYIVVGGQWGDEGKGSLIAYLALKDEPQIIARGGVGTNAGHSVFINGRKYAVRQLPTGFMQTKARLLVGAGVLVDPGVFFHELEHLKEFNVAERVGIDYRCAIIEPRHKERDRASSYLHDKIGTTGSGCGPANADRVMRMAKQAKDIKELEPYLTDVAQEINDALDEGKLVLIEGTQGFGLSLYYGTYPYVTSKDTTASAIASDVGIGPTRVDDVIVVFKSFPTRVGEGPFPTEMSAEEAERLGLVEYGTVTGRRRRVGWFDFEFARYSARLNGATMLAITMLDKYDKGAFGVTDYDKLPRKAKEFIEEIEERVGIPVGIIKTGPELEHVIDRRDTL.

GTP is bound by residues 12–18 (GDEGKGS) and 42–44 (GHS). D13 functions as the Proton acceptor in the catalytic mechanism. Residues D13 and G42 each contribute to the Mg(2+) site. Residues 13–16 (DEGK), 40–43 (NAGH), T127, R141, Q179, T194, and R256 each bind IMP. H43 serves as the catalytic Proton donor. 252–258 (TVTGRRR) serves as a coordination point for substrate. Residues R258, 284 to 286 (MLD), and 324 to 326 (KTG) contribute to the GTP site.

It belongs to the adenylosuccinate synthetase family. As to quaternary structure, homodimer. Requires Mg(2+) as cofactor.

It is found in the cytoplasm. The enzyme catalyses IMP + L-aspartate + GTP = N(6)-(1,2-dicarboxyethyl)-AMP + GDP + phosphate + 2 H(+). It participates in purine metabolism; AMP biosynthesis via de novo pathway; AMP from IMP: step 1/2. Its function is as follows. Plays an important role in the de novo pathway of purine nucleotide biosynthesis. Catalyzes the first committed step in the biosynthesis of AMP from IMP. This chain is Adenylosuccinate synthetase, found in Thermococcus onnurineus (strain NA1).